Here is a 103-residue protein sequence, read N- to C-terminus: Nucleoid-associated protein NIS_0256 (103 aa).

It belongs to the YbaB/EbfC family. Homodimer.

Its subcellular location is the cytoplasm. It is found in the nucleoid. Functionally, binds to DNA and alters its conformation. May be involved in regulation of gene expression, nucleoid organization and DNA protection. This Nitratiruptor sp. (strain SB155-2) protein is Nucleoid-associated protein NIS_0256.